The chain runs to 1627 residues: Adhesin P1 (1627 aa).

Residues 1-59 form the signal peptide; sequence MHQTKKTALSKSTWILILTATASLATGLTVVGHFTSTTTTLKRQQFSYTRPDEVALRHT. Disordered stretches follow at residues 219–238, 252–355, 898–953, and 1274–1362; these read LPQQ…AMFG, NEKL…PWRP, WRND…TTQD, and SFGT…TGND. Residues 224–234 are compositionally biased toward polar residues; that stretch reads TESGQNTSTTG. Over residues 261-276 the composition is skewed to low complexity; the sequence is TGSSTTSGSGQSTQRG. Residues 282 to 297 show a composition bias toward basic and acidic residues; the sequence is TKVKALKIEVKKKSDS. Polar residues-rich tracts occupy residues 903-933, 939-953, and 1274-1297; these read ASSG…SAGN, QDNI…TTQD, and SFGT…VFGT. The segment covering 1307–1320 has biased composition (gly residues); sequence SGGGAGGGSSGSGQ. A compositionally biased stretch (low complexity) spans 1341–1352; sequence STSDGNTSSTNN. Residues 1403-1415 form a cytadherence epitope region; that stretch reads GPQSVKFKSPDQI. Residues 1527 to 1547 traverse the membrane as a helical segment; it reads AITVPIVVIVLSVTLGLAIGI. The segment at 1589–1627 is disordered; the sequence is QAPKRLKQTSAAKPGAPRPPVPPKPGAPKPPVQPPKKPA. The span at 1604 to 1627 shows a compositional bias: pro residues; that stretch reads APRPPVPPKPGAPKPPVQPPKKPA.

It belongs to the adhesin P1 family.

It localises to the cell membrane. Its subcellular location is the cell projection. It is found in the attachment organelle. The protein localises to the cell surface. Functionally, the protein is the major adhesin mediating the attachment of this mycoplasma to respiratory epithelium. This is Adhesin P1 (mgpA) from Mycoplasma pneumoniae (strain ATCC 29342 / M129 / Subtype 1) (Mycoplasmoides pneumoniae).